The following is a 1142-amino-acid chain: Enamelin (1142 aa).

Residues 1–39 (MLVLRCRLGTSFPKLDNLVPKGKMKILLVFLGLLGNSVA) form the signal peptide. Disordered stretches follow at residues 88-193 (QYQM…ISNE), 214-326 (YYSE…PNIR), 398-671 (PANL…QNRW), 874-955 (CCAG…LRRN), 1020-1048 (VIGTPDEGSNPEGIQSQVQENESERQQQR), and 1062-1092 (LAKHHSSTTGTPSSDGRQSPFDGDSITPTEN). A compositionally biased stretch (basic residues) spans 103–114 (HPRKSSAPKRHN). Residues asparagine 114 and asparagine 126 are each glycosylated (N-linked (GlcNAc...) asparagine). The segment covering 117-128 (DQTQETQKPNQT) has biased composition (polar residues). Positions 140–162 (KQPSHNQPQPEEEAQPPQAFPPF) are enriched in low complexity. Over residues 170–186 (QQPPWQIPQRLPPPGYG) the composition is skewed to pro residues. A phosphoserine mark is found at serine 191 and serine 216. A compositionally biased stretch (basic and acidic residues) spans 223-234 (DFEKPKEEDPPK). The span at 240 to 285 (TEPTANSTVTETNSTQPNPKGSQGGNDTSPTGNSTPGLNTGNNPPA) shows a compositional bias: polar residues. Residues asparagine 245, asparagine 252, asparagine 265, and asparagine 296 are each glycosylated (N-linked (GlcNAc...) asparagine). The span at 429 to 442 (RNEKIQNPKEKPLG) shows a compositional bias: basic and acidic residues. Composition is skewed to polar residues over residues 452-470 (KNPTSPWRNSQQYEVNKSN), 507-516 (SDGQTQSQNL), and 531-544 (SETNQSELKHSSYQ). N-linked (GlcNAc...) asparagine glycosylation occurs at asparagine 467. Residue asparagine 534 is glycosylated (N-linked (GlcNAc...) asparagine). A compositionally biased stretch (basic and acidic residues) spans 556-588 (AKEHFPAGRNTWDHQEISPPFKEDPGRQEEHLP). The segment covering 652-661 (NEEDPVDPTG) has biased composition (acidic residues). A compositionally biased stretch (polar residues) spans 924-934 (SPTSILPGQRN). N-linked (GlcNAc...) asparagine glycosylation occurs at asparagine 934. Residues 935 to 951 (SSEKRESQNPFRDDVST) show a composition bias toward basic and acidic residues. N-linked (GlcNAc...) asparagine glycosylation occurs at asparagine 1040. A compositionally biased stretch (polar residues) spans 1068–1078 (STTGTPSSDGR).

In terms of processing, phosphorylated by FAM20C in vitro. Expressed in tooth particularly in odontoblast, ameloblast and cementoblast.

The protein localises to the secreted. The protein resides in the extracellular space. It localises to the extracellular matrix. In terms of biological role, involved in the mineralization and structural organization of enamel. Involved in the extension of enamel during the secretory stage of dental enamel formation. This is Enamelin (ENAM) from Homo sapiens (Human).